A 244-amino-acid polypeptide reads, in one-letter code: MLIGCASLTIQLGKRTILKDISMGVEPGEIVTIIGPNGSGKTTLLRAMIGAVAPRSGRLIRAPGLTLGYAPQTLHIDETLPMTVQRFMSLPKLGTASDIDAALSQAGVPGLEKQQIMSLSGGQLQRVLLARALLGRPRLLLLDEATQGLDPRGVADFYRQITSVRDELGCAIIMVSHELHLVMRKTDRVICLNGHICCEGEPDIVSRSPEYLALFGIDNDDEAAIALHSHGRGRSHHGSLSRAG.

The 216-residue stretch at 3-218 (IGCASLTIQL…PEYLALFGID (216 aa)) folds into the ABC transporter domain. 35–42 (GPNGSGKT) provides a ligand contact to ATP.

This sequence belongs to the ABC transporter superfamily. Zinc importer (TC 3.A.1.15.5) family. The complex is composed of two ATP-binding proteins (ZnuC), two transmembrane proteins (ZnuB) and a solute-binding protein (ZnuA).

It localises to the cell inner membrane. It carries out the reaction Zn(2+)(out) + ATP(in) + H2O(in) = Zn(2+)(in) + ADP(in) + phosphate(in) + H(+)(in). In terms of biological role, part of the ABC transporter complex ZnuABC involved in zinc import. Responsible for energy coupling to the transport system. In Hahella chejuensis (strain KCTC 2396), this protein is Zinc import ATP-binding protein ZnuC 2.